The following is a 293-amino-acid chain: Formamidopyrimidine-DNA glycosylase (293 aa).

The active-site Schiff-base intermediate with DNA is the Pro2. Residue Glu3 is the Proton donor of the active site. Lys58 serves as the catalytic Proton donor; for beta-elimination activity. DNA is bound by residues His104, Arg127, and Arg170. The FPG-type zinc finger occupies 257–293 (SVYGREGKPCRNPACGGTVERVVQSGRSTFFCASCQT). Catalysis depends on Arg283, which acts as the Proton donor; for delta-elimination activity.

It belongs to the FPG family. As to quaternary structure, monomer. Zn(2+) serves as cofactor.

It catalyses the reaction Hydrolysis of DNA containing ring-opened 7-methylguanine residues, releasing 2,6-diamino-4-hydroxy-5-(N-methyl)formamidopyrimidine.. The enzyme catalyses 2'-deoxyribonucleotide-(2'-deoxyribose 5'-phosphate)-2'-deoxyribonucleotide-DNA = a 3'-end 2'-deoxyribonucleotide-(2,3-dehydro-2,3-deoxyribose 5'-phosphate)-DNA + a 5'-end 5'-phospho-2'-deoxyribonucleoside-DNA + H(+). Functionally, involved in base excision repair of DNA damaged by oxidation or by mutagenic agents. Acts as a DNA glycosylase that recognizes and removes damaged bases. Has a preference for oxidized purines, such as 7,8-dihydro-8-oxoguanine (8-oxoG). Has AP (apurinic/apyrimidinic) lyase activity and introduces nicks in the DNA strand. Cleaves the DNA backbone by beta-delta elimination to generate a single-strand break at the site of the removed base with both 3'- and 5'-phosphates. In Brucella melitensis biotype 1 (strain ATCC 23456 / CCUG 17765 / NCTC 10094 / 16M), this protein is Formamidopyrimidine-DNA glycosylase.